The sequence spans 367 residues: Developmentally-regulated GTP-binding protein 1 (367 aa).

Residues 2–16 are required for interaction with STK16; it reads SGTLARIAEIEAEMA. The OBG-type G domain occupies 65-290; it reads ARIGFVGFPS…LLEKIWDYLQ (226 aa). GTP is bound by residues 71 to 78, 96 to 100, 117 to 120, 248 to 251, and 271 to 273; these read GFPSVGKS, FTTLT, DLPG, NKID, and SAH. Mg(2+) is bound by residues Ser-78 and Thr-98. Positions 290–366 constitute a TGS domain; sequence QLVRIYTKPK…EDEDVIQIVK (77 aa).

The protein belongs to the TRAFAC class OBG-HflX-like GTPase superfamily. OBG GTPase family. Mg(2+) is required as a cofactor. The cofactor is K(+). Expressed in many adult amd embryonic tissues. In adults, highest levels in ovaries and testes, followed by skeletal muscle, stomach, brain, kidney and liver. Weak expression in heart and brain.

The protein localises to the nucleus. It is found in the cytoplasm. It carries out the reaction GTP + H2O = GDP + phosphate + H(+). Functionally, catalyzes the conversion of GTP to GDP through hydrolysis of the gamma-phosphate bond in GTP. Binds to microtubules and promotes microtubule polymerization and bundling. GTPase activity is not necessary for these microtubule-related functions. The sequence is that of Developmentally-regulated GTP-binding protein 1 (drg1) from Xenopus laevis (African clawed frog).